Reading from the N-terminus, the 212-residue chain is Prolactin (212 aa).

The signal sequence occupies residues 1–24; that stretch reads MAHRETNGSKLFITVLCMVAACSA. 2 disulfides stabilise this stretch: Cys-70–Cys-185 and Cys-202–Cys-212.

The protein belongs to the somatotropin/prolactin family.

It localises to the secreted. This is Prolactin (prl) from Sparus aurata (Gilthead sea bream).